A 377-amino-acid chain; its full sequence is Delta(12) fatty acid desaturase DES8.11 (377 aa).

Transmembrane regions (helical) follow at residues 55–75 and 79–99; these read LIVA…IPTP and LAWP…WVIG. The Histidine box-1 motif lies at 100 to 104; the sequence is HECGH. Residues 112-132 traverse the membrane as a helical segment; sequence LIDDIVGFVLHSALLTPYFSW. Residues 136 to 140 carry the Histidine box-2 motif; the sequence is HRNHH. 3 helical membrane passes run 174-194, 220-240, and 244-264; these read VFTL…TNIS, VLLS…LVAA, and AWVI…FVLI. The short motif at 310–314 is the Histidine box-3 element; it reads HVLHH.

It belongs to the fatty acid desaturase type 1 family.

It is found in the membrane. It functions in the pathway lipid metabolism; polyunsaturated fatty acid biosynthesis. Converts linoleic acid into a conjugated octadecatrienoic acid, probably calendic acid. This chain is Delta(12) fatty acid desaturase DES8.11, found in Calendula officinalis (Pot marigold).